A 301-amino-acid chain; its full sequence is Acetylglutamate kinase (301 aa).

Residues 68-69 (GG), R90, and N195 each bind substrate.

The protein belongs to the acetylglutamate kinase family. ArgB subfamily.

Its subcellular location is the cytoplasm. The enzyme catalyses N-acetyl-L-glutamate + ATP = N-acetyl-L-glutamyl 5-phosphate + ADP. It functions in the pathway amino-acid biosynthesis; L-arginine biosynthesis; N(2)-acetyl-L-ornithine from L-glutamate: step 2/4. In terms of biological role, catalyzes the ATP-dependent phosphorylation of N-acetyl-L-glutamate. This chain is Acetylglutamate kinase, found in Pseudomonas savastanoi pv. phaseolicola (strain 1448A / Race 6) (Pseudomonas syringae pv. phaseolicola (strain 1448A / Race 6)).